The following is a 290-amino-acid chain: MEGTLLRRYGGFYYVESEGRVWTCRLRGRFRLQETVFLPGDRVEIKPVGPGEGVIEDLKPRRTCLKRPAVANVEQVIIVFALREPPPDLELLDRLLFLSGVEDIEAVIVWNKADISKQEYAGLPELYRQIGYRNLITSAHTGQGIDELKALLAGRLSTFAGPSGVGKSSLLNAIQPGLNLRTGEVSSKGGRGRHTTRQAELIRLPDGGWVADTPGFSRLDLPAITREEVAAYFPEMEPLRGRCRYASCLHRKEPGCAVVAAVEAGLIIKHRYEHYLTFLAEVIARERSFS.

One can recognise a CP-type G domain in the interval 62–219 (RTCLKRPAVA…VADTPGFSRL (158 aa)). GTP-binding positions include 111–114 (NKAD) and 161–169 (GPSGVGKSS). The Zn(2+) site is built by cysteine 243, cysteine 248, histidine 250, and cysteine 256.

It belongs to the TRAFAC class YlqF/YawG GTPase family. RsgA subfamily. Monomer. Associates with 30S ribosomal subunit, binds 16S rRNA. It depends on Zn(2+) as a cofactor.

It is found in the cytoplasm. Functionally, one of several proteins that assist in the late maturation steps of the functional core of the 30S ribosomal subunit. Helps release RbfA from mature subunits. May play a role in the assembly of ribosomal proteins into the subunit. Circularly permuted GTPase that catalyzes slow GTP hydrolysis, GTPase activity is stimulated by the 30S ribosomal subunit. This chain is Small ribosomal subunit biogenesis GTPase RsgA, found in Moorella thermoacetica (strain ATCC 39073 / JCM 9320).